A 163-amino-acid polypeptide reads, in one-letter code: General stress protein 16O (163 aa).

Basic and acidic residues predominate over residues Gln19–Glu30. Disordered regions lie at residues Gln19 to Thr55 and Ala115 to Lys163. The dksA C4-type; degenerate zinc finger occupies Cys89–Thr123. Over residues Ser127–Asp146 the composition is skewed to basic and acidic residues.

The chain is General stress protein 16O (yocK) from Bacillus subtilis (strain 168).